Consider the following 353-residue polypeptide: Nicotinate-nucleotide--dimethylbenzimidazole phosphoribosyltransferase (353 aa).

Catalysis depends on Glu-320, which acts as the Proton acceptor.

It belongs to the CobT family.

It carries out the reaction 5,6-dimethylbenzimidazole + nicotinate beta-D-ribonucleotide = alpha-ribazole 5'-phosphate + nicotinate + H(+). The protein operates within nucleoside biosynthesis; alpha-ribazole biosynthesis; alpha-ribazole from 5,6-dimethylbenzimidazole: step 1/2. In terms of biological role, catalyzes the synthesis of alpha-ribazole-5'-phosphate from nicotinate mononucleotide (NAMN) and 5,6-dimethylbenzimidazole (DMB). This is Nicotinate-nucleotide--dimethylbenzimidazole phosphoribosyltransferase from Syntrophotalea carbinolica (strain DSM 2380 / NBRC 103641 / GraBd1) (Pelobacter carbinolicus).